The sequence spans 32 residues: FGSFIPCAHKGEPCTICCRPLRCHEEKTPTCV.

A 4-hydroxyproline mark is found at Pro6, Pro13, Pro20, and Pro29. 3 disulfide bridges follow: Cys7/Cys18, Cys14/Cys23, and Cys17/Cys31.

Expressed by the venom duct.

It localises to the secreted. In terms of biological role, intraperitoneal injection into fish (0.5 nmol) provokes vertical suspension and paralysis after 6 minutes. This is Conotoxin pr6b from Conus parius (Cone snail).